The primary structure comprises 103 residues: Co-chaperonin GroES (103 aa).

Belongs to the GroES chaperonin family. Heptamer of 7 subunits arranged in a ring. Interacts with the chaperonin GroEL.

It is found in the cytoplasm. In terms of biological role, together with the chaperonin GroEL, plays an essential role in assisting protein folding. The GroEL-GroES system forms a nano-cage that allows encapsulation of the non-native substrate proteins and provides a physical environment optimized to promote and accelerate protein folding. GroES binds to the apical surface of the GroEL ring, thereby capping the opening of the GroEL channel. This Parasynechococcus marenigrum (strain WH8102) protein is Co-chaperonin GroES.